Here is a 77-residue protein sequence, read N- to C-terminus: ATP synthase subunit c (77 aa).

2 consecutive transmembrane segments (helical) span residues 13 to 33 (IATV…GIVA) and 55 to 75 (FLGI…YFIF).

This sequence belongs to the ATPase C chain family. In terms of assembly, F-type ATPases have 2 components, F(1) - the catalytic core - and F(0) - the membrane proton channel. F(1) has five subunits: alpha(3), beta(3), gamma(1), delta(1), epsilon(1). F(0) has three main subunits: a(1), b(2) and c(10-14). The alpha and beta chains form an alternating ring which encloses part of the gamma chain. F(1) is attached to F(0) by a central stalk formed by the gamma and epsilon chains, while a peripheral stalk is formed by the delta and b chains.

Its subcellular location is the cell membrane. F(1)F(0) ATP synthase produces ATP from ADP in the presence of a proton or sodium gradient. F-type ATPases consist of two structural domains, F(1) containing the extramembraneous catalytic core and F(0) containing the membrane proton channel, linked together by a central stalk and a peripheral stalk. During catalysis, ATP synthesis in the catalytic domain of F(1) is coupled via a rotary mechanism of the central stalk subunits to proton translocation. Functionally, key component of the F(0) channel; it plays a direct role in translocation across the membrane. A homomeric c-ring of between 10-14 subunits forms the central stalk rotor element with the F(1) delta and epsilon subunits. The sequence is that of ATP synthase subunit c from Clavibacter michiganensis subsp. michiganensis (strain NCPPB 382).